We begin with the raw amino-acid sequence, 342 residues long: Inositol-tetrakisphosphate 1-kinase 1 (342 aa).

2 residues coordinate 1D-myo-inositol 6-phosphate: Lys28 and Lys70. ATP is bound by residues Arg105 and Lys155. An ATP-grasp domain is found at 116 to 332; sequence DHAADQDSTF…HKDGVGNQQE (217 aa). Gly161 and His166 together coordinate 1D-myo-inositol 6-phosphate. His166, Gln187, and Val190 together coordinate ATP. 1D-myo-inositol 6-phosphate is bound by residues Lys198 and Tyr200. Ser213 is an ATP binding site. Residues 219 to 247 are catalytic specificity elements (CSE); sequence PEDDASAQGSVSFSQVSNLPTERTAEEYY. Asn280 contacts 1D-myo-inositol 6-phosphate. Asp282 contributes to the Mg(2+) binding site. ATP contacts are provided by Ile296, Asp297, and Asn299. Asp297 and Asn299 together coordinate Mg(2+). The 1D-myo-inositol 6-phosphate site is built by Asn299, Gly303, and Lys306.

It belongs to the ITPK1 family. In terms of assembly, monomer. It depends on Mg(2+) as a cofactor. Expressed in the embryo of 15 day after pollination. Expressed in kernels at earlier stages but at very low levels. Expression in the embryo peaks at 15 days after pollination and then declines. No expression is detected from endosperm and vegetative tissues.

The enzyme catalyses 1D-myo-inositol 3,4,5,6-tetrakisphosphate + ATP = 1D-myo-inositol 1,3,4,5,6-pentakisphosphate + ADP + H(+). It carries out the reaction 1D-myo-inositol 1,3,4-trisphosphate + ATP = 1D-myo-inositol 1,3,4,5-tetrakisphosphate + ADP + H(+). The catalysed reaction is 1D-myo-inositol 1,3,4-trisphosphate + ATP = 1D-myo-inositol 1,3,4,6-tetrakisphosphate + ADP + H(+). It catalyses the reaction 1D-myo-inositol 1,2,3,4,5-pentakisphosphate + ATP = 3-diphospho-1D-myo-inositol 1,2,4,5-tetrakisphosphate + ADP. The enzyme catalyses 1D-myo-inositol hexakisphosphate + ATP = 5-diphospho-1D-myo-inositol 1,2,3,4,6-pentakisphosphate + ADP. Functionally, kinase that can phosphorylate various inositol polyphosphate such as Ins(3,4,5,6)P4 or Ins(1,3,4)P3 and participates in phytic acid biosynthesis in developing seeds. Phosphorylates Ins(3,4,5,6)P4 at position 1 to form Ins(1,3,4,5,6)P5. This reaction is thought to have regulatory importance, since Ins(3,4,5,6)P4 is an inhibitor of plasma membrane Ca(2+)-activated Cl(-) channels, while Ins(1,3,4,5,6)P5 is not. Also phosphorylates Ins(1,3,4)P3 on O-5 and O-6 to form Ins(1,3,4,6)P4, an essential molecule in the hexakisphosphate (InsP6) pathway. Also able to phosphorylate Ins(3,5,6)P3 but not Ins(1,4,5)P3, Ins(2,4,5)P3, Ins(1,3,4,6)P4 nor Ins(1,3,5,6)P4. Has higher specific activity on Ins(3,4,5,6)P4 than Ins(1,3,4)P3 and Ins(3,5,6)P3. Can also could use Ins(1,2,5,6)P4 as a substrate. Able to add a beta-phosphate to the 3 positions of Ins(1,2,3,4,5)P5 and to add beta-phosphate to InsP6 to yield 5-InsP7, thus exhibiting InsP6 kinase activity. Also has Ins(1,3,4,5,6)P5 phosphatase activity. The chain is Inositol-tetrakisphosphate 1-kinase 1 from Zea mays (Maize).